The chain runs to 62 residues: uncharacterized protein (62 aa).

Residues 15-37 (FSSGVLISNFLLFNFIIISHSSL) form a helical membrane-spanning segment. Positions 41–56 (TTTTTTTTTTTTNTKS) are enriched in low complexity. The segment at 41–62 (TTTTTTTTTTTTNTKSTLHRSG) is disordered.

It is found in the membrane. This is an uncharacterized protein from Dictyostelium discoideum (Social amoeba).